The sequence spans 270 residues: Bis(5'-nucleosyl)-tetraphosphatase, symmetrical (270 aa).

The protein belongs to the Ap4A hydrolase family.

The catalysed reaction is P(1),P(4)-bis(5'-adenosyl) tetraphosphate + H2O = 2 ADP + 2 H(+). In terms of biological role, hydrolyzes diadenosine 5',5'''-P1,P4-tetraphosphate to yield ADP. This chain is Bis(5'-nucleosyl)-tetraphosphatase, symmetrical, found in Thioalkalivibrio sulfidiphilus (strain HL-EbGR7).